A 155-amino-acid chain; its full sequence is Aspartate carbamoyltransferase regulatory chain (155 aa).

Positions 113, 118, 141, and 144 each coordinate Zn(2+).

It belongs to the PyrI family. In terms of assembly, contains catalytic and regulatory chains. Zn(2+) is required as a cofactor.

Functionally, involved in allosteric regulation of aspartate carbamoyltransferase. The sequence is that of Aspartate carbamoyltransferase regulatory chain from Methanococcus aeolicus (strain ATCC BAA-1280 / DSM 17508 / OCM 812 / Nankai-3).